Consider the following 459-residue polypeptide: U1 small nuclear ribonucleoprotein 70 kDa (459 aa).

Residues 99–178 (KTIFVSRISY…RRIVVDIERG (80 aa)) enclose the RRM domain. A disordered region spans residues 185–459 (KPRKFGGGLG…YSMISNENGF (275 aa)). The span at 211–241 (EMSESREKEKEREKEKEKEKERMEKMKKRDG) shows a compositional bias: basic and acidic residues. Over residues 242 to 254 (GLSSNGNRSNGIS) the composition is skewed to low complexity. Over residues 263–408 (DRGDRGDRDR…IDERRRDQRD (146 aa)) the composition is skewed to basic and acidic residues. Positions 426–440 (QHHHHQQNHQSHHNQ) are enriched in basic residues.

Its subcellular location is the nucleus. Functionally, mediates the splicing of pre-mRNA by binding to the stem loop I region of U1-snRNA. The sequence is that of U1 small nuclear ribonucleoprotein 70 kDa (snrnp70) from Dictyostelium discoideum (Social amoeba).